A 74-amino-acid chain; its full sequence is Translational regulator CsrA (74 aa).

This sequence belongs to the CsrA/RsmA family. In terms of assembly, homodimer; the beta-strands of each monomer intercalate to form a hydrophobic core, while the alpha-helices form wings that extend away from the core.

The protein localises to the cytoplasm. Functionally, a translational regulator that binds mRNA to regulate translation initiation and/or mRNA stability. Usually binds in the 5'-UTR at or near the Shine-Dalgarno sequence preventing ribosome-binding, thus repressing translation. Its main target seems to be the major flagellin gene, while its function is anatagonized by FliW. The chain is Translational regulator CsrA from Bacillus velezensis (strain DSM 23117 / BGSC 10A6 / LMG 26770 / FZB42) (Bacillus amyloliquefaciens subsp. plantarum).